The primary structure comprises 472 residues: Alanine--anticapsin ligase (472 aa).

Glu109 contributes to the Mg(2+) binding site. ATP-binding residues include Lys138 and Lys178. An ATP-grasp domain is found at 142 to 355 (RDAFNKAGVK…MAQLLLDVLC (214 aa)). Leu182 contacts Mg(2+). Residues 184–185 (SS), 226–229 (EEFL), and Gln268 contribute to the ATP site. Substrate is bound by residues Glu273 and 309–311 (HTE). Mg(2+) is bound by residues Glu311 and Glu324. 328–331 (RFAG) lines the substrate pocket.

In terms of assembly, monomer or homodimer. Requires Mg(2+) as cofactor.

The enzyme catalyses L-anticapsin + L-alanine + ATP = bacilysin + ADP + phosphate + H(+). It functions in the pathway antibiotic biosynthesis; bacilysin biosynthesis. Its function is as follows. Part of the bacABCDEFG operon responsible for the biosynthesis of bacilysin, an irreversible inactivator of the glutaminase domain of glucosamine synthetase. Catalyzes the formation of alpha-dipeptides from various L-amino acids in the presence of ATP. In vivo catalyzes the ligation of L-alanine and L-anticapsin (epoxycyclohexanonyl-Ala) to produce the final bacilysin antibiotic (L-Ala-L-4S-cyclohexenonyl-Ala dipeptide). The substrate specificity is restricted to small amino acids such as L-Ala, for the N-terminal end of the dipeptide, whereas a wide range of hydrophobic amino acids such as L-Phe, L-Tyr and L-Met are recognized for the C-terminal end. The protein is Alanine--anticapsin ligase of Bacillus subtilis (strain 168).